Consider the following 491-residue polypeptide: FAD-dependent monooxygenase idtM (491 aa).

The FAD site is built by E34, G48, R107, D307, and A320. A helical transmembrane segment spans residues 448–468; it reads ILSLVYVVAGLAMMYMSIYLV.

The protein belongs to the paxM FAD-dependent monooxygenase family. FAD serves as cofactor.

The protein localises to the membrane. It functions in the pathway secondary metabolite biosynthesis. FAD-dependent monooxygenase; part of the gene cluster that mediates the biosynthesis of paspalitrems, indole-diterpene (IDT) mycotoxins that are potent tremorgens in mammals. The geranylgeranyl diphosphate (GGPP) synthase idtG is proposed to catalyze the first step in IDT biosynthesis via catalysis of a series of iterative condensations of isopentenyl diphosphate (IPP) with dimethylallyl diphosphate (DMAPP), geranyl diphosphate (GPP), and farnesyl diphosphate (FPP), to form GGPP. Condensation of indole-3-glycerol phosphate with GGPP by the prenyltransferase idtC then forms 3-geranylgeranylindole (3-GGI). Epoxidation of the two terminal alkenes of the geranylgeranyl moiety by the FAD-dependent monooxygenase idtM, and cyclization by the terpene cyclase idtB then leads to the production of paspaline. The cytochrome P450 monooxygenase idtP then catalyzes oxidative elimination of the pendant methyl group at C-12 of paspaline and generates the C-10 ketone to yield 13-desoxypaxilline. The cytochrome P450 monooxygenase idtQ may catalyze the C-13 oxidation of 13-desoxypaxilline to afford paxilline. Considering that both paspalicine and paxilline were detected in C.paspali, idtQ also catalyzes the formation of paspalinine from 13-desoxypaxilline via paspalicine as an intermediate. Finally, the alpha-prenyltransferase idtF prenylates paspalinine at the C-20 or the C-21 positions to yield paspalitrems A and C, respectively. The hydroxylation of paspalitrem A at C-32 by a still unknown oxidase affords paspalitrem B. The polypeptide is FAD-dependent monooxygenase idtM (Claviceps paspali (Rye ergot fungus)).